The chain runs to 82 residues: MKTLLLTLVVVTIMCLDLGYTLVCYTNVLEPPGTLETCPDDFTCVKKWEGGGRRVTQYCSHACAIPASYEFVHCCQTDKCNG.

Residues 1 to 21 (MKTLLLTLVVVTIMCLDLGYT) form the signal peptide. Intrachain disulfides connect cysteine 24–cysteine 44, cysteine 38–cysteine 59, cysteine 63–cysteine 74, and cysteine 75–cysteine 80.

The protein belongs to the three-finger toxin family. Short-chain subfamily. Expressed by the venom gland.

The protein resides in the secreted. Its function is as follows. Has been described to inhibit nicotinic acetylcholine receptor (nAChR) alpha-7/CHRNA7 subunits and to bind acetylcholine binding protein (AChBP) (Kd=29.5 nM). The polypeptide is Three-finger toxin MicTx3 (Micrurus corallinus (Brazilian coral snake)).